The primary structure comprises 852 residues: Leucine--tRNA ligase (852 aa).

The 'HIGH' region motif lies at 42–52 (PYPSGKLHMGH). Positions 586–606 (NKYVPADQVDPNDPKDPETGE) are disordered. Residues 614-618 (KMSKS) carry the 'KMSKS' region motif. Residue Lys617 participates in ATP binding.

It belongs to the class-I aminoacyl-tRNA synthetase family.

The protein resides in the cytoplasm. It catalyses the reaction tRNA(Leu) + L-leucine + ATP = L-leucyl-tRNA(Leu) + AMP + diphosphate. In Picosynechococcus sp. (strain ATCC 27264 / PCC 7002 / PR-6) (Agmenellum quadruplicatum), this protein is Leucine--tRNA ligase.